The following is a 299-amino-acid chain: Nucleotide-binding protein glr4163 (299 aa).

18 to 25 (SPAGAGRT) contributes to the ATP binding site.

Belongs to the RapZ-like family.

Its function is as follows. Displays ATPase and GTPase activities. The sequence is that of Nucleotide-binding protein glr4163 from Gloeobacter violaceus (strain ATCC 29082 / PCC 7421).